We begin with the raw amino-acid sequence, 429 residues long: Putative chloride channel protein ClcB-like (429 aa).

The next 11 membrane-spanning stretches (helical) occupy residues 1–21 (MLAIAGLIGCAGALATIAFRE), 44–64 (LPWWARLLVPTAGGLLAGLTL), 146–166 (LLVACGAAAGITSAYNAPIAG), 168–188 (VFVCEIVFGAITTATLGPLLV), 200–220 (FFGYGAVYAMPHFDFVSGWEV), 221–241 (LTYLGLGLAAGMAGPLLLGLI), 259–279 (LALGGLIVGALSIRVPEVWGN), 283–303 (VVNGFLHAPWLWQTVALVLVC), 315–335 (GAVGGVFTPTLFCGAALGLLY), 354–376 (AVVGMGALLAATTHAPLMSILMI), and 383–405 (YQVVLPLMLACITGYVTAHATGA).

Belongs to the chloride channel (TC 2.A.49) family. ClcB subfamily.

The protein resides in the cell inner membrane. The chain is Putative chloride channel protein ClcB-like from Ralstonia nicotianae (strain ATCC BAA-1114 / GMI1000) (Ralstonia solanacearum).